A 441-amino-acid polypeptide reads, in one-letter code: Ubiquitin carboxyl-terminal hydrolase MINDY-3 (441 aa).

The active-site Nucleophile is the cysteine 51. Histidine 284 (proton acceptor) is an active-site residue.

It belongs to the MINDY deubiquitinase family. FAM188 subfamily.

Its subcellular location is the nucleus. The catalysed reaction is Thiol-dependent hydrolysis of ester, thioester, amide, peptide and isopeptide bonds formed by the C-terminal Gly of ubiquitin (a 76-residue protein attached to proteins as an intracellular targeting signal).. Functionally, hydrolase that can remove 'Lys-48'-linked conjugated ubiquitin from proteins. The protein is Ubiquitin carboxyl-terminal hydrolase MINDY-3 (mindy3) of Xenopus tropicalis (Western clawed frog).